Reading from the N-terminus, the 267-residue chain is Imidazole glycerol phosphate synthase subunit HisF (267 aa).

Active-site residues include Asp22 and Asp141.

Belongs to the HisA/HisF family. As to quaternary structure, heterodimer of HisH and HisF.

It localises to the cytoplasm. The catalysed reaction is 5-[(5-phospho-1-deoxy-D-ribulos-1-ylimino)methylamino]-1-(5-phospho-beta-D-ribosyl)imidazole-4-carboxamide + L-glutamine = D-erythro-1-(imidazol-4-yl)glycerol 3-phosphate + 5-amino-1-(5-phospho-beta-D-ribosyl)imidazole-4-carboxamide + L-glutamate + H(+). It functions in the pathway amino-acid biosynthesis; L-histidine biosynthesis; L-histidine from 5-phospho-alpha-D-ribose 1-diphosphate: step 5/9. Its function is as follows. IGPS catalyzes the conversion of PRFAR and glutamine to IGP, AICAR and glutamate. The HisF subunit catalyzes the cyclization activity that produces IGP and AICAR from PRFAR using the ammonia provided by the HisH subunit. The protein is Imidazole glycerol phosphate synthase subunit HisF of Mycobacterium tuberculosis (strain ATCC 25177 / H37Ra).